Reading from the N-terminus, the 210-residue chain is Imidazole glycerol phosphate synthase subunit HisH (210 aa).

The 208-residue stretch at threonine 3–alanine 210 folds into the Glutamine amidotransferase type-1 domain. Residue cysteine 81 is the Nucleophile of the active site. Catalysis depends on residues histidine 190 and glutamate 192.

In terms of assembly, heterodimer of HisH and HisF.

Its subcellular location is the cytoplasm. The catalysed reaction is 5-[(5-phospho-1-deoxy-D-ribulos-1-ylimino)methylamino]-1-(5-phospho-beta-D-ribosyl)imidazole-4-carboxamide + L-glutamine = D-erythro-1-(imidazol-4-yl)glycerol 3-phosphate + 5-amino-1-(5-phospho-beta-D-ribosyl)imidazole-4-carboxamide + L-glutamate + H(+). It carries out the reaction L-glutamine + H2O = L-glutamate + NH4(+). The protein operates within amino-acid biosynthesis; L-histidine biosynthesis; L-histidine from 5-phospho-alpha-D-ribose 1-diphosphate: step 5/9. In terms of biological role, IGPS catalyzes the conversion of PRFAR and glutamine to IGP, AICAR and glutamate. The HisH subunit catalyzes the hydrolysis of glutamine to glutamate and ammonia as part of the synthesis of IGP and AICAR. The resulting ammonia molecule is channeled to the active site of HisF. In Geobacter metallireducens (strain ATCC 53774 / DSM 7210 / GS-15), this protein is Imidazole glycerol phosphate synthase subunit HisH.